The chain runs to 374 residues: Ribosomal RNA large subunit methyltransferase G (374 aa).

It belongs to the methyltransferase superfamily. RlmG family.

It is found in the cytoplasm. It catalyses the reaction guanosine(1835) in 23S rRNA + S-adenosyl-L-methionine = N(2)-methylguanosine(1835) in 23S rRNA + S-adenosyl-L-homocysteine + H(+). Specifically methylates the guanine in position 1835 (m2G1835) of 23S rRNA. This chain is Ribosomal RNA large subunit methyltransferase G, found in Pseudomonas savastanoi pv. phaseolicola (strain 1448A / Race 6) (Pseudomonas syringae pv. phaseolicola (strain 1448A / Race 6)).